Here is a 269-residue protein sequence, read N- to C-terminus: NAD kinase (269 aa).

Asp-45 (proton acceptor) is an active-site residue. Residues 45–46 (DG), 122–123 (NE), Arg-149, Asp-151, and Ala-186 contribute to the NAD(+) site.

This sequence belongs to the NAD kinase family. The cofactor is a divalent metal cation.

The protein localises to the cytoplasm. It catalyses the reaction NAD(+) + ATP = ADP + NADP(+) + H(+). Its function is as follows. Involved in the regulation of the intracellular balance of NAD and NADP, and is a key enzyme in the biosynthesis of NADP. Catalyzes specifically the phosphorylation on 2'-hydroxyl of the adenosine moiety of NAD to yield NADP. The sequence is that of NAD kinase from Staphylococcus haemolyticus (strain JCSC1435).